The primary structure comprises 600 residues: Melanophilin (600 aa).

One can recognise a RabBD domain in the interval 4 to 124 (KLDLSKLTDE…IGSLEWYYEH (121 aa)). The segment at 64–107 (CARCLQPYQLLVNSKRQCLECGLFTCKSCGRVHPEEQGWICDPC) adopts an FYVE-type zinc-finger fold. 4 disordered regions span residues 146–277 (QGGA…AELC), 390–465 (EELT…LSEL), 499–541 (TVKP…AKAM), and 553–600 (NSLK…AHQS). Basic and acidic residues-rich tracts occupy residues 232-243 (CSEKAAPHKAEG) and 409-420 (KDEKAEPNRDKS). Residues 373–496 (GVRTEADVEE…ESRIAALRAA (124 aa)) are a coiled coil. Residues 558 to 569 (QGKDDDSFDRKS) show a composition bias toward basic and acidic residues.

Binds RAB27A that has been activated by GTP-binding via its N-terminus. Binds MYO5A via its C-terminal coiled coil domain.

It is found in the cytoplasm. Rab effector protein involved in melanosome transport. Serves as link between melanosome-bound RAB27A and the motor protein MYO5A. This is Melanophilin (MLPH) from Homo sapiens (Human).